The chain runs to 427 residues: Proteinase-activated receptor 1 (427 aa).

A signal peptide spans 1-21 (MGPRWLLLWAAGLGLCSPLVS). The propeptide at 22–41 (ARTRGPRPGTDPTNGTLGPR) is removed for receptor activation. The tract at residues 23 to 87 (RTRGPRPGTD…RSSPPQKSPP (65 aa)) is disordered. Asn35 is a glycosylation site (N-linked (GlcNAc...) asparagine). The Extracellular segment spans residues 42 to 104 (SFFLRNSNDG…SGYLTSAWLT (63 aa)). Residues 58 to 68 (PEDEDSSEGEF) are compositionally biased toward acidic residues. Asn77 carries N-linked (GlcNAc...) asparagine glycosylation. Residues 105–130 (VFIPSVYTGVFLVSLPLNIMAVVVFV) form a helical membrane-spanning segment. Topologically, residues 131-139 (LKMKVKKPA) are cytoplasmic. The chain crosses the membrane as a helical span at residues 140 to 159 (VVYMLHLAAADVLFVCVLPF). Over 160–178 (KISYYFSGSDWRFGSAMCR) the chain is Extracellular. Cys177 and Cys256 are disulfide-bonded. The chain crosses the membrane as a helical span at residues 179 to 200 (FVTAAFYGNMYASIMLMTAISV). Over 201-220 (DRFLAVVYPIQSLSWRTLGR) the chain is Cytoplasmic. Residues 221-241 (ASFICLAIWAMAIAGVAPLLL) traverse the membrane as a helical segment. Topologically, residues 242–270 (QEQATQVPGLNITACHDVLNQTLLEGYYS) are extracellular. Asn252 and Asn261 each carry an N-linked (GlcNAc...) asparagine glycan. The chain crosses the membrane as a helical span at residues 271–290 (YYFSAFSAVFFFVPLTLSTV). Residues 291–313 (SYVSIIRCLSSSTVANQNKKSRA) are Cytoplasmic-facing. Residues 314-336 (LLLSAAVFCIFILCFGPTNILLL) form a helical membrane-spanning segment. At 337-351 (LHYAFLSSDPMTEAA) the chain is on the extracellular side. A helical membrane pass occupies residues 352–376 (YFAYLLCVCVSSISCCIDPLIYYYA). Topologically, residues 377–427 (SSECQRHLFAILHCKESSDPGSCNSSGQLMPSKMDTCSSNLSSSLYKKLLT) are cytoplasmic. The residue at position 420 (Ser420) is a Phosphoserine.

The protein belongs to the G-protein coupled receptor 1 family. Post-translationally, proteolytic cleavage by thrombin generates a new N-terminus that functions as a tethered ligand. Also proteolytically cleaved by cathepsin CTSG. In terms of processing, phosphorylated in the C-terminal tail; probably mediating desensitization prior to the uncoupling and internalization of the receptor.

It is found in the cell membrane. High affinity receptor that binds the activated thrombin, leading to calcium release from intracellular stores. The thrombin-activated receptor signaling pathway is mediated through PTX-insensitive G proteins, activation of phospholipase C resulting in the production of 1D-myo-inositol 1,4,5-trisphosphate (InsP3) which binds to InsP3 receptors causing calcium release from the stores. In astrocytes, the calcium released into the cytosol allows the Ca(2+)-dependent release of L-glutamate into the synaptic cleft through BEST1, that targets the neuronal postsynaptic GRIN2A/NMDAR receptor resulting in the synaptic plasticity regulation. May play a role in platelets activation and in vascular development. Mediates up-regulation of pro-inflammatory cytokines, such as MCP-1/CCL2 and IL6, triggered by coagulation factor Xa (F10) in cardiac fibroblasts and umbilical vein endothelial cells. This Bos taurus (Bovine) protein is Proteinase-activated receptor 1.